A 752-amino-acid polypeptide reads, in one-letter code: Complement C2 (752 aa).

The N-terminal stretch at 1-20 (MGPLMVLFCLLFLYPGLADS) is a signal peptide. Sushi domains lie at 22–86 (PSCP…VCKP), 87–146 (VRCP…VCDN), and 149–206 (GHCP…ICRQ). 6 cysteine pairs are disulfide-bonded: cysteine 24–cysteine 64, cysteine 51–cysteine 84, cysteine 89–cysteine 131, cysteine 117–cysteine 144, cysteine 151–cysteine 191, and cysteine 177–cysteine 204. An N-linked (GlcNAc...) asparagine glycan is attached at asparagine 29. N-linked (GlcNAc...) asparagine glycosylation is present at asparagine 112. Positions 254–452 (NLYLLLDCSQ…KALHQVFEHM (199 aa)) constitute a VWFA domain. Residues 260–264 (DCSQS) carry the MIDAS-like motif motif. Mg(2+) is bound by residues serine 262 and serine 264. Residues asparagine 290 and asparagine 333 are each glycosylated (N-linked (GlcNAc...) asparagine). A Mg(2+)-binding site is contributed by threonine 337. 3 disulfide bridges follow: cysteine 463–cysteine 581, cysteine 492–cysteine 508, and cysteine 584–cysteine 600. Residues 464 to 744 (GVGNMSANAS…MQPWLRQHLG (281 aa)) enclose the Peptidase S1 domain. 2 N-linked (GlcNAc...) asparagine glycosylation sites follow: asparagine 467 and asparagine 471. Catalysis depends on charge relay system residues histidine 507 and aspartate 561. Residues asparagine 621 and asparagine 651 are each glycosylated (N-linked (GlcNAc...) asparagine). Disulfide bonds link cysteine 638-cysteine 665 and cysteine 675-cysteine 705. The Charge relay system role is filled by serine 679.

Belongs to the peptidase S1 family. In terms of assembly, serine protease component of the C3 convertase, also named C4bC2b, composed of the serine protease complement C2b and complement C4b. Serine protease component of the C5 convertase, also named C4bC2bC3b, composed of the serine protease complement C2b, complement C3b, as well as complement C4b. It depends on Mg(2+) as a cofactor. Mn(2+) serves as cofactor. Cleaved and activated by different proteases depending on the complement pathway to generate complement C2a and serine protease complement C2b chains. Cleaved and activated by C1S following activation by the classical complement system. Cleaved and activated by MASP2 following activation by the lectin complement system. Cleaved and activated by GZMK following activation by the GZMK complement system.

The protein resides in the secreted. It is found in the cell surface. The catalysed reaction is Selective cleavage of Arg-|-Ser bond in complement component C3 alpha-chain to form C3a and C3b, and Arg-|-Xaa bond in complement component C5 alpha-chain to form C5a and C5b.. Precursor of the catalytic component of the C3 and C5 convertase complexes, which are part of the complement pathway, a cascade of proteins that leads to phagocytosis and breakdown of pathogens and signaling that strengthens the adaptive immune system. Component C2 is part of the classical, lectin and GZMK complement systems. In terms of biological role, catalytic component of the complement C3 and C5 convertase complexes. Following complement activation, recruited to the surface of pathogens by complement C4b opsonin to form the C3 convertase, or C3b and C4b opsonins to form the C5 convertase. As part of the C3 convertase, cleaves and activate C3 into C3a anaphylatoxin and C3b opsonin, the next components of the complement pathways. As part of the C5 convertase, cleaves and activate C5 into C5a anaphylatoxin and C5b component of the membrane attack complex. The chain is Complement C2 from Pan troglodytes (Chimpanzee).